An 81-amino-acid chain; its full sequence is MSEEQLKAFIAKVQADTSLQEQLKAEGADVVAIAKAAGFSITTEDLEKEHRQTLSDDDLEGVAGGFFCVQGTANRFTINVC.

The propeptide occupies 1 to 65 (MSEEQLKAFI…DDDLEGVAGG (65 aa)). A cross-link (beta-methyllanthionine (Cys-Thr)) is located at residues 68 to 72 (CVQGT). The beta-methyllanthionine (Thr-Cys) cross-link spans 77 to 81 (TINVC).

Cross-links are proved in vitro, when coepressed in E.coli with the ProcM lanthionine synthetase. In terms of processing, the beta-methyllanthionine residues have a DL configuration (with 2S,3S,6R stereochemistry). Post-translationally, maturation of prochlorosin involves the enzymatic conversion of Thr, and Ser into dehydrated AA and the formation of thioether bonds with cysteines. This is followed by membrane translocation and cleavage of the modified precursor.

The protein localises to the secreted. Functionally, lanthionine-containing peptide (lantipeptide) with unknown function. Does not show antibiotic activity against Lactococcus lactis 117 and Bacillus subtilis 6633 bacteria. Organisms that produce this peptide live in oligotrophic environments at very dilute concentrations, suggesting this peptide is not secreted to influence other bacteria. The polypeptide is Lantipeptide prochlorosin 1.1 (Prochlorococcus marinus (strain MIT 9313)).